Consider the following 158-residue polypeptide: Cyclic pyranopterin monophosphate synthase (158 aa).

Residues 75–77 and 113–114 contribute to the substrate site; these read LCH and ME. D128 is a catalytic residue.

The protein belongs to the MoaC family. Homohexamer; trimer of dimers.

It catalyses the reaction (8S)-3',8-cyclo-7,8-dihydroguanosine 5'-triphosphate = cyclic pyranopterin phosphate + diphosphate. It participates in cofactor biosynthesis; molybdopterin biosynthesis. Catalyzes the conversion of (8S)-3',8-cyclo-7,8-dihydroguanosine 5'-triphosphate to cyclic pyranopterin monophosphate (cPMP). This chain is Cyclic pyranopterin monophosphate synthase, found in Actinobacillus succinogenes (strain ATCC 55618 / DSM 22257 / CCUG 43843 / 130Z).